The sequence spans 372 residues: Glutamate 5-kinase (372 aa).

An ATP-binding site is contributed by Lys14. Residues Ser54, Asp141, and Asn153 each contribute to the substrate site. 173–174 (TD) contributes to the ATP binding site. The 79-residue stretch at 280–358 (RGTLVLDDGA…DAIEALLGYV (79 aa)) folds into the PUA domain.

This sequence belongs to the glutamate 5-kinase family.

The protein localises to the cytoplasm. The enzyme catalyses L-glutamate + ATP = L-glutamyl 5-phosphate + ADP. The protein operates within amino-acid biosynthesis; L-proline biosynthesis; L-glutamate 5-semialdehyde from L-glutamate: step 1/2. In terms of biological role, catalyzes the transfer of a phosphate group to glutamate to form L-glutamate 5-phosphate. In Pseudomonas aeruginosa (strain UCBPP-PA14), this protein is Glutamate 5-kinase.